The chain runs to 147 residues: Hemoglobin subunit beta (147 aa).

The 145-residue stretch at 3–147 (HWTAEEKQLI…VAHALARKYH (145 aa)) folds into the Globin domain. 2 residues coordinate heme b: histidine 64 and histidine 93.

This sequence belongs to the globin family. As to quaternary structure, heterotetramer of two alpha chains and two beta chains. As to expression, red blood cells.

Involved in oxygen transport from the lung to the various peripheral tissues. The polypeptide is Hemoglobin subunit beta (HBB) (Anas platyrhynchos (Mallard)).